Here is a 217-residue protein sequence, read N- to C-terminus: Transcription antitermination protein NusB (217 aa).

This sequence belongs to the NusB family.

Its function is as follows. Involved in transcription antitermination. Required for transcription of ribosomal RNA (rRNA) genes. Binds specifically to the boxA antiterminator sequence of the ribosomal RNA (rrn) operons. The sequence is that of Transcription antitermination protein NusB from Microcystis aeruginosa (strain NIES-843 / IAM M-2473).